The sequence spans 269 residues: Arginine and glutamate-rich protein 1-B (269 aa).

Over residues 1–57 the composition is skewed to basic residues; that stretch reads MGRSRSRSSSRSKHSKTSKHSKKRSRSRSRSRDRERKRRSKSRESKRNRRRESRSRS. The necessary and sufficient for RNA binding stretch occupies residues 1–70; the sequence is MGRSRSRSSS…TATSRRDRER (70 aa). Disordered regions lie at residues 1–109 and 233–269; these read MGRS…MERQ and RMKLEQERQKQQKEEQKMILGKGKSRPKLSFSLKASE. Basic and acidic residues-rich tracts occupy residues 64-80, 89-109, and 233-249; these read SRRDRERAASPPERIDI, SAVDEKQKKEEEEKKVEMERQ, and RMKLEQERQKQQKEEQK. The interval 71 to 269 is necessary and sufficient for transcriptional regulation; sequence AASPPERIDI…KLSFSLKASE (199 aa).

The protein belongs to the ARGLU1 family.

It is found in the nucleus. Its subcellular location is the nucleus speckle. It localises to the chromosome. Dual function regulator of gene expression; regulator of transcription and modulator of alternative splicing. General coactivator of nuclear receptor-induced gene expression. The polypeptide is Arginine and glutamate-rich protein 1-B (arglu1b) (Danio rerio (Zebrafish)).